Consider the following 297-residue polypeptide: tRNA pseudouridine synthase B (297 aa).

Asp-44 functions as the Nucleophile in the catalytic mechanism.

It belongs to the pseudouridine synthase TruB family. Type 1 subfamily.

It catalyses the reaction uridine(55) in tRNA = pseudouridine(55) in tRNA. Responsible for synthesis of pseudouridine from uracil-55 in the psi GC loop of transfer RNAs. This chain is tRNA pseudouridine synthase B, found in Corynebacterium glutamicum (strain ATCC 13032 / DSM 20300 / JCM 1318 / BCRC 11384 / CCUG 27702 / LMG 3730 / NBRC 12168 / NCIMB 10025 / NRRL B-2784 / 534).